The following is an 89-amino-acid chain: Small ribosomal subunit protein uS15 (89 aa).

The protein belongs to the universal ribosomal protein uS15 family. In terms of assembly, part of the 30S ribosomal subunit. Forms a bridge to the 50S subunit in the 70S ribosome, contacting the 23S rRNA.

In terms of biological role, one of the primary rRNA binding proteins, it binds directly to 16S rRNA where it helps nucleate assembly of the platform of the 30S subunit by binding and bridging several RNA helices of the 16S rRNA. Its function is as follows. Forms an intersubunit bridge (bridge B4) with the 23S rRNA of the 50S subunit in the ribosome. This chain is Small ribosomal subunit protein uS15, found in Streptococcus pyogenes serotype M1.